A 110-amino-acid chain; its full sequence is Protein YcgL (110 aa).

Residues methionine 14–leucine 98 form the YcgL domain. The interval proline 87–arginine 110 is disordered. A compositionally biased stretch (polar residues) spans histidine 97 to arginine 110.

The sequence is that of Protein YcgL from Salmonella newport (strain SL254).